A 1066-amino-acid chain; its full sequence is Pumilio homolog 2 (1066 aa).

Residues 1–260 (MNHDFQALAL…ATVGLFDYNS (260 aa)) are interaction with SNAPIN. 3 positions are modified to phosphoserine: serine 67, serine 82, and serine 102. Positions 106 to 204 (KLDSRFRKGN…NPSEGLGPLP (99 aa)) are disordered. A compositionally biased stretch (basic and acidic residues) spans 119-133 (RDAETDGPEKGDQKG). Phosphoserine occurs at positions 136, 178, and 182. A phosphothreonine mark is found at threonine 184 and threonine 396. The tract at residues 494–553 (STNGLFRPIGTQPPQQQQQQPSTNLQSNSFYGSSSLTNSSQSSSLFSHGPGQPGSTSLGF) is disordered. A compositionally biased stretch (low complexity) spans 505–514 (QPPQQQQQQP). A compositionally biased stretch (polar residues) spans 515-525 (STNLQSNSFYG). Residues 526–540 (SSSLTNSSQSSSLFS) show a composition bias toward low complexity. Phosphoserine is present on residues serine 587 and serine 592. The interval 620 to 650 (SPIGMPLPSQTPGHSLTPPPSLSSHGSSSSL) is disordered. Residues 630 to 650 (TPGHSLTPPPSLSSHGSSSSL) are compositionally biased toward low complexity. An Omega-N-methylarginine modification is found at arginine 674. A phosphoserine mark is found at serine 684 and serine 700. In terms of domain architecture, PUM-HD spans 706–1048 (GRSRLLEDFR…HILAKLEKYY (343 aa)). Pumilio repeat units follow at residues 726-761 (DLIG…MVFN), 762-797 (EILQ…ALAT), 798-835 (RIRG…EMVK), 836-871 (ELDG…FIID), 872-907 (AFKG…PILE), 908-943 (ELHQ…KIVS), 944-979 (EIRG…LLID), and 983-1022 (CQND…IIMH). The adenine-nucleotide binding in RNA target stretch occupies residues 741-745 (SRFIQ). The tract at residues 777–781 (NYVIQ) is uracil-nucleotide binding in RNA target. The interval 813–817 (CRVIQ) is adenine-nucleotide binding in RNA target. The interval 851 to 855 (NHVVQ) is non-specific-nucleotide binding in RNA target. Residues 887 to 891 (CRVIQ) form an adenine-nucleotide binding in RNA target region. A uracil-nucleotide binding in RNA target region spans residues 923–927 (NYVIQ). A guanine-nucleotide binding in RNA target region spans residues 959–963 (SNVVE). The uracil-nucleotide binding in RNA target stretch occupies residues 1002–1006 (NYVVQ).

As to quaternary structure, homodimer; homodimerizes in vitro. Interacts with DAZ1, DAZL and NANOS1 via its pumilio repeats. Interacts with NANOS3. Interacts with SNAPIN. Recruits the CCR4-POP2-NOT deadenylase leading to translational inhibition and mRNA degradation. Interacts with DDX20. In case of viral infection, interacts with DHX58. Interacts with TRIM71 (via NHL repeats) in an RNA-dependent manner. As to expression, expressed in male germ cells of adult testis (at protein level). Highly expressed in testis and ovary. Predominantly expressed in stem cells and germ cells. Expressed at lower level in brain, heart, kidney, liver, muscle, placenta, intestine and stomach Expressed in cerebellum, corpus callosum, caudate nucleus, hippocampus, medulla oblongata and putamen. Expressed in all fetal tissues tested.

Its subcellular location is the cytoplasm. The protein localises to the cytoplasmic granule. It is found in the perinuclear region. Functionally, sequence-specific RNA-binding protein that acts as a post-transcriptional repressor by binding the 3'-UTR of mRNA targets. Binds to an RNA consensus sequence, the Pumilio Response Element (PRE), 5'-UGUANAUA-3', that is related to the Nanos Response Element (NRE) (, PubMed:21397187). Mediates post-transcriptional repression of transcripts via different mechanisms: acts via direct recruitment of the CCR4-POP2-NOT deadenylase leading to translational inhibition and mRNA degradation. Also mediates deadenylation-independent repression by promoting accessibility of miRNAs. Acts as a post-transcriptional repressor of E2F3 mRNAs by binding to its 3'-UTR and facilitating miRNA regulation. Plays a role in cytoplasmic sensing of viral infection. Represses a program of genes necessary to maintain genomic stability such as key mitotic, DNA repair and DNA replication factors. Its ability to repress those target mRNAs is regulated by the lncRNA NORAD (non-coding RNA activated by DNA damage) which, due to its high abundance and multitude of PUMILIO binding sites, is able to sequester a significant fraction of PUM1 and PUM2 in the cytoplasm. May regulate DCUN1D3 mRNA levels. May support proliferation and self-renewal of stem cells. Binds specifically to miRNA MIR199A precursor, with PUM1, regulates miRNA MIR199A expression at a postranscriptional level. The sequence is that of Pumilio homolog 2 (PUM2) from Homo sapiens (Human).